The chain runs to 387 residues: Formate-dependent phosphoribosylglycinamide formyltransferase (387 aa).

Residues 15–16 and Glu75 each bind N(1)-(5-phospho-beta-D-ribosyl)glycinamide; that span reads EL. ATP is bound by residues Arg106, Lys147, 152 to 157, 187 to 190, and Glu195; these read SSGKGQ and EEFI. The ATP-grasp domain occupies 111–301; the sequence is DLASNELNIR…EFELHLRAVL (191 aa). Positions 260 and 272 each coordinate Mg(2+). Residues Asp279, Lys349, and 356–357 each bind N(1)-(5-phospho-beta-D-ribosyl)glycinamide; that span reads RR.

Belongs to the PurK/PurT family. As to quaternary structure, homodimer.

It catalyses the reaction N(1)-(5-phospho-beta-D-ribosyl)glycinamide + formate + ATP = N(2)-formyl-N(1)-(5-phospho-beta-D-ribosyl)glycinamide + ADP + phosphate + H(+). It functions in the pathway purine metabolism; IMP biosynthesis via de novo pathway; N(2)-formyl-N(1)-(5-phospho-D-ribosyl)glycinamide from N(1)-(5-phospho-D-ribosyl)glycinamide (formate route): step 1/1. In terms of biological role, involved in the de novo purine biosynthesis. Catalyzes the transfer of formate to 5-phospho-ribosyl-glycinamide (GAR), producing 5-phospho-ribosyl-N-formylglycinamide (FGAR). Formate is provided by PurU via hydrolysis of 10-formyl-tetrahydrofolate. In Prochlorococcus marinus (strain NATL2A), this protein is Formate-dependent phosphoribosylglycinamide formyltransferase.